Consider the following 140-residue polypeptide: Cysteine desulfuration protein SufE (140 aa).

Cys-51 serves as the catalytic Cysteine persulfide intermediate.

The protein belongs to the SufE family. As to quaternary structure, homodimer. Interacts with SufS.

Its subcellular location is the cytoplasm. It participates in cofactor biosynthesis; iron-sulfur cluster biosynthesis. Participates in cysteine desulfuration mediated by SufS. Cysteine desulfuration mobilizes sulfur from L-cysteine to yield L-alanine and constitutes an essential step in sulfur metabolism for biosynthesis of a variety of sulfur-containing biomolecules. Functions as a sulfur acceptor for SufS, by mediating the direct transfer of the sulfur atom from the S-sulfanylcysteine of SufS, an intermediate product of cysteine desulfuration process. The chain is Cysteine desulfuration protein SufE from Yersinia pseudotuberculosis serotype O:1b (strain IP 31758).